We begin with the raw amino-acid sequence, 354 residues long: UPF0425 pyridoxal phosphate-dependent protein MMP0002 (354 aa).

Position 210 is an N6-(pyridoxal phosphate)lysine (Lys210).

The protein belongs to the UPF0425 family. Pyridoxal 5'-phosphate is required as a cofactor.

The protein is UPF0425 pyridoxal phosphate-dependent protein MMP0002 of Methanococcus maripaludis (strain DSM 14266 / JCM 13030 / NBRC 101832 / S2 / LL).